The sequence spans 720 residues: Nucleolar protein 11 (720 aa).

The segment at 365-392 (KDPETKPSNAGAQKKTRERKTNANAGNG) is disordered.

Its subcellular location is the nucleus. The protein resides in the nucleolus. Ribosome biogenesis factor. May be required for both optimal rDNA transcription and pre-rRNA processing. This Xenopus laevis (African clawed frog) protein is Nucleolar protein 11 (nol11).